The primary structure comprises 378 residues: Apolipoprotein A-IV (378 aa).

The signal sequence occupies residues 1-20; that stretch reads MFLKAVVLTLSLVAITGARA. 13 tandem repeats follow at residues 33-54, 60-81, 82-98, 110-130, 131-152, 153-174, 175-196, 197-218, 219-240, 241-262, 263-280, 281-302, and 303-324. The 13 X 22 AA approximate tandem repeats stretch occupies residues 33-324; that stretch reads DYFSQLSNNA…QVEELRQKLG (292 aa). The tract at residues 354 to 378 is disordered; it reads EKESQDTPVALPKQEQEQSAVPLES.

This sequence belongs to the apolipoprotein A1/A4/E family. In terms of assembly, homodimer.

It is found in the secreted. In terms of biological role, may have a role in chylomicrons and VLDL secretion and catabolism. Required for efficient activation of lipoprotein lipase by ApoC-II; potent activator of LCAT. Apoa-IV is a major component of HDL and chylomicrons. This chain is Apolipoprotein A-IV, found in Canis lupus familiaris (Dog).